Here is an 88-residue protein sequence, read N- to C-terminus: Acyl-CoA-binding domain-containing protein 7 (88 aa).

An ACB domain is found at 3–88 (LQADFDQAAQ…ARELIEKYGI (86 aa)). Residues R15, 30 to 34 (YGLYK), K56, and Y75 contribute to the an acyl-CoA site.

The protein belongs to the ACBD7 family.

In terms of biological role, binds medium- and long-chain acyl-CoA esters. The sequence is that of Acyl-CoA-binding domain-containing protein 7 (Acbd7) from Mus musculus (Mouse).